A 231-amino-acid polypeptide reads, in one-letter code: Phosphatidylserine decarboxylase proenzyme (231 aa).

Ser-188 functions as the Schiff-base intermediate with substrate; via pyruvic acid in the catalytic mechanism. Ser-188 carries the pyruvic acid (Ser); by autocatalysis modification.

This sequence belongs to the phosphatidylserine decarboxylase family. PSD-A subfamily. As to quaternary structure, heterodimer of a large membrane-associated beta subunit and a small pyruvoyl-containing alpha subunit. The cofactor is pyruvate. In terms of processing, is synthesized initially as an inactive proenzyme. Formation of the active enzyme involves a self-maturation process in which the active site pyruvoyl group is generated from an internal serine residue via an autocatalytic post-translational modification. Two non-identical subunits are generated from the proenzyme in this reaction, and the pyruvate is formed at the N-terminus of the alpha chain, which is derived from the carboxyl end of the proenzyme. The post-translation cleavage follows an unusual pathway, termed non-hydrolytic serinolysis, in which the side chain hydroxyl group of the serine supplies its oxygen atom to form the C-terminus of the beta chain, while the remainder of the serine residue undergoes an oxidative deamination to produce ammonia and the pyruvoyl prosthetic group on the alpha chain.

It is found in the cell membrane. It carries out the reaction a 1,2-diacyl-sn-glycero-3-phospho-L-serine + H(+) = a 1,2-diacyl-sn-glycero-3-phosphoethanolamine + CO2. Its pathway is phospholipid metabolism; phosphatidylethanolamine biosynthesis; phosphatidylethanolamine from CDP-diacylglycerol: step 2/2. Catalyzes the formation of phosphatidylethanolamine (PtdEtn) from phosphatidylserine (PtdSer). This is Phosphatidylserine decarboxylase proenzyme from Rickettsia prowazekii (strain Madrid E).